Consider the following 670-residue polypeptide: Acetolactate synthase, chloroplastic (670 aa).

2 stretches are compositionally biased toward low complexity: residues 1 to 48 (MAAA…SSSS) and 55 to 77 (KSSS…TTPS). The transit peptide at 1–55 (MAAATTTTTTSSSISFSTKPSPSSSKSPLPISRFSLPFSLNPNKSSSSSRRRGIK) directs the protein to the chloroplast. The interval 1–94 (MAAATTTTTT…ETFISRFAPD (94 aa)) is disordered. Position 144 (Glu144) interacts with thiamine diphosphate. Residue Ser186 participates in FAD binding. A thiamine diphosphate-binding site is contributed by Gln207. (R)-imazaquin contacts are provided by Lys220 and Arg246. Arg246 contacts FAD. Lys256 is a chlorimuron-ethyl binding site. FAD contacts are provided by residues Gly308 and 331-332 (TL). Cys340 carries the post-translational modification Cysteine sulfinic acid (-SO2H). FAD-binding positions include 349–352 (LGMH) and 371–375 (GVRFD). A chlorimuron-ethyl-binding site is contributed by 376-377 (DR). Residues 395–396 (DI) and 414–415 (DV) contribute to the FAD site. The stretch at 414-446 (DVKLALQGMNKVLENRAEELKLDFGVWRNELNV) forms a coiled coil. A thiamine diphosphate-binding site is contributed by 487–488 (QH). Residue 508–509 (GG) participates in FAD binding. Thiamine diphosphate is bound by residues 511-513 (GAM), 538-540 (DGS), and 565-570 (NQHLGM). Mg(2+) is bound by residues Asp538, Asn565, and His567. Trp574 and Ser653 together coordinate chlorimuron-ethyl.

The protein belongs to the TPP enzyme family. In terms of assembly, homodimer or homotetramer. The acetolactate synthase complex contains both large catalytic subunits and small regulatory subunits. Homodimer. The acetolactate synthase complex contains 4 homodimers of the large catalytic subunits, and 1 homotetramer of the small regulatory subunits. Mg(2+) is required as a cofactor. FAD serves as cofactor. The cofactor is thiamine diphosphate.

It is found in the plastid. The protein localises to the chloroplast. It carries out the reaction 2 pyruvate + H(+) = (2S)-2-acetolactate + CO2. The protein operates within amino-acid biosynthesis; L-isoleucine biosynthesis; L-isoleucine from 2-oxobutanoate: step 1/4. It functions in the pathway amino-acid biosynthesis; L-valine biosynthesis; L-valine from pyruvate: step 1/4. Its activity is regulated as follows. Inhibited by asymmetric aryl disulfides, triazolopyrimidine sulfonanilide compounds, isatin derivatives, and sulfonylurea and imidazolinone herbicides. Insensitive to feed-back inhibition by branched-chain amino acids. In terms of biological role, catalyzes the formation of acetolactate from pyruvate, the first step in valine and isoleucine biosynthesis. This chain is Acetolactate synthase, chloroplastic (ALS), found in Arabidopsis thaliana (Mouse-ear cress).